A 104-amino-acid polypeptide reads, in one-letter code: Integration host factor subunit alpha (104 aa).

This sequence belongs to the bacterial histone-like protein family. In terms of assembly, heterodimer of an alpha and a beta chain.

Its function is as follows. This protein is one of the two subunits of integration host factor, a specific DNA-binding protein that functions in genetic recombination as well as in transcriptional and translational control. The protein is Integration host factor subunit alpha of Bartonella quintana (strain Toulouse) (Rochalimaea quintana).